Here is a 298-residue protein sequence, read N- to C-terminus: Heme A synthase (298 aa).

Over methionine 1 to lysine 6 the chain is Cytoplasmic. Residues isoleucine 7–threonine 27 traverse the membrane as a helical segment. The Extracellular portion of the chain corresponds to lysine 28–arginine 62. Cysteine 35 and cysteine 42 are oxidised to a cystine. Glutamate 58 is a catalytic residue. Residue histidine 61 participates in heme o binding. Residues isoleucine 63–leucine 83 form a helical membrane-spanning segment. Residues serine 84–methionine 92 lie on the Cytoplasmic side of the membrane. A helical membrane pass occupies residues alanine 93–phenylalanine 113. Topologically, residues glycine 114 to histidine 117 are extracellular. Residues alanine 118 to threonine 138 traverse the membrane as a helical segment. Histidine 123 serves as a coordination point for heme o. Over threonine 139–tyrosine 158 the chain is Cytoplasmic. Residues lysine 159 to valine 179 traverse the membrane as a helical segment. The Extracellular portion of the chain corresponds to lysine 180 to histidine 209. Cysteine 188 and cysteine 194 are joined by a disulfide. A helical membrane pass occupies residues phenylalanine 210 to threonine 230. A heme b-binding site is contributed by histidine 212. The Cytoplasmic segment spans residues leucine 231 to histidine 244. Residues isoleucine 245–glycine 265 form a helical membrane-spanning segment. Over asparagine 266–alanine 271 the chain is Extracellular. The helical transmembrane segment at methionine 272–leucine 292 threads the bilayer. Heme b is bound at residue histidine 274. At serine 293–valine 298 the chain is on the cytoplasmic side.

Belongs to the COX15/CtaA family. Type 1 subfamily. As to quaternary structure, interacts with CtaB. The cofactor is heme b.

It localises to the cell membrane. It carries out the reaction Fe(II)-heme o + 2 A + H2O = Fe(II)-heme a + 2 AH2. It participates in porphyrin-containing compound metabolism; heme A biosynthesis; heme A from heme O: step 1/1. In terms of biological role, catalyzes the conversion of heme O to heme A by two successive hydroxylations of the methyl group at C8. The first hydroxylation forms heme I, the second hydroxylation results in an unstable dihydroxymethyl group, which spontaneously dehydrates, resulting in the formyl group of heme A. In Halalkalibacterium halodurans (strain ATCC BAA-125 / DSM 18197 / FERM 7344 / JCM 9153 / C-125) (Bacillus halodurans), this protein is Heme A synthase.